The chain runs to 110 residues: METLAQHRHARSSAQKVRLVADLIRGKKVSQALDILTYTNKKAAVLVKKVLESAIANAEHNDGADIDDLKVTKIFVDEGPSMKRIMPRAKGRADRILKRTSHITVVVSDR.

The protein belongs to the universal ribosomal protein uL22 family. Part of the 50S ribosomal subunit.

Its function is as follows. This protein binds specifically to 23S rRNA; its binding is stimulated by other ribosomal proteins, e.g. L4, L17, and L20. It is important during the early stages of 50S assembly. It makes multiple contacts with different domains of the 23S rRNA in the assembled 50S subunit and ribosome. In terms of biological role, the globular domain of the protein is located near the polypeptide exit tunnel on the outside of the subunit, while an extended beta-hairpin is found that lines the wall of the exit tunnel in the center of the 70S ribosome. In Salmonella arizonae (strain ATCC BAA-731 / CDC346-86 / RSK2980), this protein is Large ribosomal subunit protein uL22.